The chain runs to 391 residues: 3-ketoacyl-CoA thiolase (391 aa).

Cysteine 95 functions as the Acyl-thioester intermediate in the catalytic mechanism. Residues histidine 347 and cysteine 377 each act as proton acceptor in the active site.

It belongs to the thiolase-like superfamily. Thiolase family. As to quaternary structure, heterotetramer of two alpha chains (FadB) and two beta chains (FadA).

It localises to the cytoplasm. The catalysed reaction is an acyl-CoA + acetyl-CoA = a 3-oxoacyl-CoA + CoA. Its pathway is lipid metabolism; fatty acid beta-oxidation. In terms of biological role, catalyzes the final step of fatty acid oxidation in which acetyl-CoA is released and the CoA ester of a fatty acid two carbons shorter is formed. This chain is 3-ketoacyl-CoA thiolase, found in Saccharophagus degradans (strain 2-40 / ATCC 43961 / DSM 17024).